An 819-amino-acid polypeptide reads, in one-letter code: Leucine--tRNA ligase (819 aa).

The short motif at 41-51 (PYPSGTLHVGH) is the 'HIGH' region element. The 'KMSKS' region motif lies at 578 to 582 (KMSKS). Lys-581 is an ATP binding site.

The protein belongs to the class-I aminoacyl-tRNA synthetase family.

It is found in the cytoplasm. The catalysed reaction is tRNA(Leu) + L-leucine + ATP = L-leucyl-tRNA(Leu) + AMP + diphosphate. In Fervidobacterium nodosum (strain ATCC 35602 / DSM 5306 / Rt17-B1), this protein is Leucine--tRNA ligase.